The chain runs to 144 residues: Granulocyte-macrophage colony-stimulating factor (144 aa).

An N-terminal signal peptide occupies residues 1–17; sequence MWLQNLLFLNTVVCSIS. 2 O-linked (GalNAc...) serine glycosylation sites follow: Ser22 and Ser24. The O-linked (GalNAc...) threonine glycan is linked to Thr27. 3 N-linked (GlcNAc...) asparagine glycosylation sites follow: Asn44, Asn45, and Asn54. Intrachain disulfides connect Cys71/Cys113 and Cys105/Cys138.

Belongs to the GM-CSF family. As to quaternary structure, monomer. The signaling GM-CSF receptor complex is a dodecamer of two head-to-head hexamers of two alpha, two beta, and two ligand subunits.

Its subcellular location is the secreted. Cytokine that stimulates the growth and differentiation of hematopoietic precursor cells from various lineages, including granulocytes, macrophages, eosinophils and erythrocytes. This chain is Granulocyte-macrophage colony-stimulating factor (CSF2), found in Felis catus (Cat).